Reading from the N-terminus, the 311-residue chain is Syntaxin-111 (311 aa).

Over 1–284 (MNDLMTKSFM…AREHQRSSRK (284 aa)) the chain is Cytoplasmic. A t-SNARE coiled-coil homology domain is found at 213 to 275 (VHEIQDRHDA…QGGNKELRKA (63 aa)). A helical; Anchor for type IV membrane protein membrane pass occupies residues 285-305 (WLCIGIIILLLLVLLVIVPIA). The Vesicular segment spans residues 306-311 (TSFKRS).

Belongs to the syntaxin family. As to expression, expressed in roots and panicles.

Its subcellular location is the cell membrane. The protein localises to the cytoplasm. In terms of biological role, vesicle trafficking protein that functions in the secretory pathway. The sequence is that of Syntaxin-111 from Oryza sativa subsp. japonica (Rice).